We begin with the raw amino-acid sequence, 101 residues long: Urease subunit gamma (101 aa).

The protein belongs to the urease gamma subunit family. Heterotrimer of UreA (gamma), UreB (beta) and UreC (alpha) subunits. Three heterotrimers associate to form the active enzyme.

The protein resides in the cytoplasm. It catalyses the reaction urea + 2 H2O + H(+) = hydrogencarbonate + 2 NH4(+). It functions in the pathway nitrogen metabolism; urea degradation; CO(2) and NH(3) from urea (urease route): step 1/1. The chain is Urease subunit gamma from Geobacillus kaustophilus (strain HTA426).